Here is a 333-residue protein sequence, read N- to C-terminus: tRNA(Ile)-lysidine synthase (333 aa).

Position 33–38 (33–38) interacts with ATP; it reads SGGADS.

It belongs to the tRNA(Ile)-lysidine synthase family.

The protein resides in the cytoplasm. The catalysed reaction is cytidine(34) in tRNA(Ile2) + L-lysine + ATP = lysidine(34) in tRNA(Ile2) + AMP + diphosphate + H(+). Functionally, ligates lysine onto the cytidine present at position 34 of the AUA codon-specific tRNA(Ile) that contains the anticodon CAU, in an ATP-dependent manner. Cytidine is converted to lysidine, thus changing the amino acid specificity of the tRNA from methionine to isoleucine. This chain is tRNA(Ile)-lysidine synthase, found in Salinispora tropica (strain ATCC BAA-916 / DSM 44818 / JCM 13857 / NBRC 105044 / CNB-440).